The following is a 205-amino-acid chain: Molybdenum cofactor guanylyltransferase (205 aa).

Residues 14 to 16, K27, D77, and D107 each bind GTP; that span reads LAG. Residue D107 coordinates Mg(2+).

The protein belongs to the MobA family. As to quaternary structure, monomer. Mg(2+) is required as a cofactor.

It localises to the cytoplasm. It carries out the reaction Mo-molybdopterin + GTP + H(+) = Mo-molybdopterin guanine dinucleotide + diphosphate. Functionally, transfers a GMP moiety from GTP to Mo-molybdopterin (Mo-MPT) cofactor (Moco or molybdenum cofactor) to form Mo-molybdopterin guanine dinucleotide (Mo-MGD) cofactor. In Burkholderia vietnamiensis (strain G4 / LMG 22486) (Burkholderia cepacia (strain R1808)), this protein is Molybdenum cofactor guanylyltransferase.